The primary structure comprises 196 residues: MLQELLKNHEIILASGSPRRQKFFQDLEIPVKIDVRPVDEVFSEHLKKEEITDFLSVLKSEVFLNDLKENQILITSDTIVYNEAKALGKPKDHAEAVKMISSLSGKNHEVITSVCFTSKNYQKVLNHSTRVYFSELTEKEIEYYVTNFKPFDKAGGYAIQEWIGLIGIKKIEGSYFNVVGLPTHEVYKTLKEMLNS.

Catalysis depends on D77, which acts as the Proton acceptor.

This sequence belongs to the Maf family. YhdE subfamily. The cofactor is a divalent metal cation.

The protein localises to the cytoplasm. It catalyses the reaction dTTP + H2O = dTMP + diphosphate + H(+). The enzyme catalyses UTP + H2O = UMP + diphosphate + H(+). In terms of biological role, nucleoside triphosphate pyrophosphatase that hydrolyzes dTTP and UTP. May have a dual role in cell division arrest and in preventing the incorporation of modified nucleotides into cellular nucleic acids. This chain is dTTP/UTP pyrophosphatase, found in Christiangramia forsetii (strain DSM 17595 / CGMCC 1.15422 / KT0803) (Gramella forsetii).